The following is a 300-amino-acid chain: Ribosomal protein L11 methyltransferase (300 aa).

4 residues coordinate S-adenosyl-L-methionine: Thr152, Gly173, Asp195, and Asn234.

It belongs to the methyltransferase superfamily. PrmA family.

The protein resides in the cytoplasm. It catalyses the reaction L-lysyl-[protein] + 3 S-adenosyl-L-methionine = N(6),N(6),N(6)-trimethyl-L-lysyl-[protein] + 3 S-adenosyl-L-homocysteine + 3 H(+). In terms of biological role, methylates ribosomal protein L11. The protein is Ribosomal protein L11 methyltransferase of Cupriavidus necator (strain ATCC 17699 / DSM 428 / KCTC 22496 / NCIMB 10442 / H16 / Stanier 337) (Ralstonia eutropha).